A 668-amino-acid chain; its full sequence is RNA-binding protein PIN4 (668 aa).

Residues 1–77 form a disordered region; the sequence is METSSFENAP…NLNNAPTNGA (77 aa). Positions 8–23 are enriched in low complexity; sequence NAPPAAINDAQDNNIN. Residues 24–36 are compositionally biased toward polar residues; sequence TETNDQETNQQSI. Residues 37–46 are compositionally biased toward basic and acidic residues; that stretch reads ETRDAIDKEN. Over residues 47–74 the composition is skewed to polar residues; sequence GVQTETGENSAKNAEQNVSSTNLNNAPT. Residue Ser56 is modified to Phosphoserine. The region spanning 85–163 is the RRM domain; sequence NAIVIKNIPF…RKLKVEYKKM (79 aa). The segment covering 168–188 has biased composition (basic and acidic residues); it reads ERERIEREKREKRGQLEEQHR. Positions 168 to 214 are disordered; it reads ERERIEREKREKRGQLEEQHRSSSNLSLDSLSKMSGSGNNNTSNNQL. A phosphoserine mark is found at Ser189, Ser191, Ser194, and Ser197. Low complexity predominate over residues 189–212; that stretch reads SSSNLSLDSLSKMSGSGNNNTSNN. The residue at position 305 (Thr305) is a Phosphothreonine. Disordered stretches follow at residues 374 to 398 and 420 to 570; these read QQQG…NRSQ and VNNS…QRVP. Phosphoserine is present on Ser393. The segment covering 420 to 449 has biased composition (low complexity); that stretch reads VNNSSNSNTINSNNGNGNNVIINNNSASST. Polar residues predominate over residues 450-478; sequence PKISSQGQFSMQPTLTSPKMNIHHSSQYN. Ser466 carries the phosphoserine modification. The segment covering 479–508 has biased composition (low complexity); sequence SADQPQQPQPQTQQNVQSAAQQQQSFLRQQ. Positions 509-551 are enriched in polar residues; sequence ATLTPSSRIPSGYSANHYQINSVNPLLRNSQISPPNSQIPINS. Ser541 carries the post-translational modification Phosphoserine. Over residues 552-567 the composition is skewed to low complexity; the sequence is QTLSQAQPPAQSQTQQ. 5 positions are modified to phosphoserine: Ser636, Ser638, Ser640, Ser653, and Ser655.

Interacts with RAD53. Post-translationally, hyperphosphorylated in response to DNA damage by MEC1.

It is found in the cytoplasm. Involved in normal G2/M phase transition of the mitotic cell cycle. In association with RAD53, also involved in checkpoint control in response to DNA damage. The polypeptide is RNA-binding protein PIN4 (PIN4) (Saccharomyces cerevisiae (strain ATCC 204508 / S288c) (Baker's yeast)).